A 620-amino-acid polypeptide reads, in one-letter code: Chaperone protein HscA homolog (620 aa).

This sequence belongs to the heat shock protein 70 family.

Functionally, chaperone involved in the maturation of iron-sulfur cluster-containing proteins. Has a low intrinsic ATPase activity which is markedly stimulated by HscB. The chain is Chaperone protein HscA homolog from Pseudomonas syringae pv. tomato (strain ATCC BAA-871 / DC3000).